Reading from the N-terminus, the 132-residue chain is Small ribosomal subunit protein uS8 (132 aa).

The protein belongs to the universal ribosomal protein uS8 family. In terms of assembly, part of the 30S ribosomal subunit. Contacts proteins S5 and S12.

Functionally, one of the primary rRNA binding proteins, it binds directly to 16S rRNA central domain where it helps coordinate assembly of the platform of the 30S subunit. This Ehrlichia ruminantium (strain Welgevonden) protein is Small ribosomal subunit protein uS8.